The sequence spans 397 residues: Glycine betaine/carnitine transport ATP-binding protein GbuA (397 aa).

Residues 28-264 form the ABC transporter domain; that stretch reads KSKTDILKET…PANEYVEKFI (237 aa). 60-67 provides a ligand contact to ATP; that stretch reads GLSGSGKS. 2 CBS domains span residues 279-335 and 340-395; these read MIRP…NITS and LHRD…EVNV.

It belongs to the ABC transporter superfamily. The complex is composed of two ATP-binding proteins (GbuA), two transmembrane proteins (GbuB) and a solute-binding protein (GbuC).

It catalyses the reaction a quaternary ammonium(out) + ATP + H2O = a quaternary ammonium(in) + ADP + phosphate + H(+). Its activity is regulated as follows. The complex is activated by an osmotic gradient or by low temperature. Its function is as follows. Part of the ABC transporter complex GbuABC involved in glycine betaine uptake. Responsible for energy coupling to the transport system. Involved, with BetL and OpuC, in osmoprotection and cryoprotection of Listeria. Can also uptake carnitine when carnitine is abundant in the growth medium. In Listeria monocytogenes serotype 1/2a (strain 10403S), this protein is Glycine betaine/carnitine transport ATP-binding protein GbuA (gbuA).